The chain runs to 164 residues: MRPTLLRLANASGPLPLSVSQASVQLIPPIPLYRRLLRAHRLLPVDMRYMGDSYVKSEFRLTRTTDNPLHIIGFLSQWKMYLDEIESSLIRPDGRKQGQAVEWRGKKLDTGAFEKLSTEQVGQLYELMHATKDVWKSPEQIEREANSAGVSPVNPNDPTTAGNS.

The transit peptide at 1–51 (MRPTLLRLANASGPLPLSVSQASVQLIPPIPLYRRLLRAHRLLPVDMRYMG) directs the protein to the mitochondrion. The span at 136-145 (KSPEQIEREA) shows a compositional bias: basic and acidic residues. The segment at 136–164 (KSPEQIEREANSAGVSPVNPNDPTTAGNS) is disordered. Positions 153–164 (VNPNDPTTAGNS) are enriched in polar residues.

Belongs to the complex I LYR family. SDHAF3 subfamily. Interacts with the iron-sulfur protein subunit within the SDH catalytic dimer.

It is found in the mitochondrion matrix. Functionally, plays an essential role in the assembly of succinate dehydrogenase (SDH), an enzyme complex (also referred to as respiratory complex II) that is a component of both the tricarboxylic acid (TCA) cycle and the mitochondrial electron transport chain, and which couples the oxidation of succinate to fumarate with the reduction of ubiquinone (coenzyme Q) to ubiquinol. Promotes maturation of the iron-sulfur protein subunit of the SDH catalytic dimer, protecting it from the deleterious effects of oxidants. May act together with SDHAF1. The sequence is that of Succinate dehydrogenase assembly factor 3, mitochondrial from Cryptococcus neoformans var. neoformans serotype D (strain B-3501A) (Filobasidiella neoformans).